A 477-amino-acid polypeptide reads, in one-letter code: 3-isopropylmalate dehydratase large subunit (477 aa).

[4Fe-4S] cluster is bound by residues C352, C413, and C416.

Belongs to the aconitase/IPM isomerase family. LeuC type 1 subfamily. Heterodimer of LeuC and LeuD. Requires [4Fe-4S] cluster as cofactor.

The catalysed reaction is (2R,3S)-3-isopropylmalate = (2S)-2-isopropylmalate. It participates in amino-acid biosynthesis; L-leucine biosynthesis; L-leucine from 3-methyl-2-oxobutanoate: step 2/4. Functionally, catalyzes the isomerization between 2-isopropylmalate and 3-isopropylmalate, via the formation of 2-isopropylmaleate. The chain is 3-isopropylmalate dehydratase large subunit from Pseudomonas putida (strain W619).